The primary structure comprises 94 residues: Transcription factor PRE6 (94 aa).

The tract at residues 1-20 (MSSRRSSRSRQSGSSRISDD) is disordered. One can recognise a bHLH domain in the interval 6 to 60 (SSRSRQSGSSRISDDQISDLVSKLQHLIPELRRRRSDKVSASKVLQETCNYIRNL).

This sequence belongs to the bHLH protein family. Interacts with HFR1.

The protein localises to the cytoplasm. Its subcellular location is the nucleus. Functionally, atypical and probable non DNA-binding bHLH transcription factor that regulates light-mediated responses in day light conditions by binding and inhibiting the activity of the bHLH transcription factor HFR1, a critical regulator of light signaling and shade avoidance. Forms non-functional heterodimers with HFR1, causing liberation and activation of PIF4 from the transcriptionally inactive HFR1-PIF4 complex. In Arabidopsis thaliana (Mouse-ear cress), this protein is Transcription factor PRE6 (PRE6).